The chain runs to 31 residues: Photosystem II reaction center protein T (31 aa).

The chain crosses the membrane as a helical span at residues 3-23; it reads SFAYILILGLAIATLFFAIAF.

The protein belongs to the PsbT family. PSII is composed of 1 copy each of membrane proteins PsbA, PsbB, PsbC, PsbD, PsbE, PsbF, PsbH, PsbI, PsbJ, PsbK, PsbL, PsbM, PsbT, PsbX, PsbY, PsbZ, Psb30/Ycf12, peripheral proteins PsbO, CyanoQ (PsbQ), PsbU, PsbV and a large number of cofactors. It forms dimeric complexes.

It localises to the cellular thylakoid membrane. Found at the monomer-monomer interface of the photosystem II (PS II) dimer, plays a role in assembly and dimerization of PSII. PSII is a light-driven water plastoquinone oxidoreductase, using light energy to abstract electrons from H(2)O, generating a proton gradient subsequently used for ATP formation. This Synechococcus sp. (strain CC9311) protein is Photosystem II reaction center protein T.